The chain runs to 138 residues: MVDYFDYKELLKRARSQLPEVVFSDVRFEIPSADSFVEGNRTIIKNFKDIAKFMERDTHEFAKFVMKELGTAGDMEGNRLILQGKFGWRMVNEKIQNYVNEYVLCPECGKPDTKIIKEGRIHFLKCTACGAMKPLKSL.

It belongs to the eIF-2-beta/eIF-5 family. Heterotrimer composed of an alpha, a beta and a gamma chain.

In terms of biological role, eIF-2 functions in the early steps of protein synthesis by forming a ternary complex with GTP and initiator tRNA. This chain is Translation initiation factor 2 subunit beta, found in Methanococcus vannielii (strain ATCC 35089 / DSM 1224 / JCM 13029 / OCM 148 / SB).